The chain runs to 176 residues: Large ribosomal subunit protein uL10 (176 aa).

Belongs to the universal ribosomal protein uL10 family. As to quaternary structure, part of the ribosomal stalk of the 50S ribosomal subunit. The N-terminus interacts with L11 and the large rRNA to form the base of the stalk. The C-terminus forms an elongated spine to which L12 dimers bind in a sequential fashion forming a multimeric L10(L12)X complex.

Forms part of the ribosomal stalk, playing a central role in the interaction of the ribosome with GTP-bound translation factors. This Nocardia farcinica (strain IFM 10152) protein is Large ribosomal subunit protein uL10.